The primary structure comprises 238 residues: Orotidine 5'-phosphate decarboxylase (238 aa).

Substrate-binding positions include aspartate 10, lysine 32, 59–68 (DLKLHDIPNT), threonine 122, arginine 184, glutamine 193, glycine 213, and arginine 214. The active-site Proton donor is the lysine 61.

Belongs to the OMP decarboxylase family. Type 1 subfamily. Homodimer.

It carries out the reaction orotidine 5'-phosphate + H(+) = UMP + CO2. It functions in the pathway pyrimidine metabolism; UMP biosynthesis via de novo pathway; UMP from orotate: step 2/2. Functionally, catalyzes the decarboxylation of orotidine 5'-monophosphate (OMP) to uridine 5'-monophosphate (UMP). The sequence is that of Orotidine 5'-phosphate decarboxylase from Bacillus thuringiensis subsp. konkukian (strain 97-27).